Consider the following 215-residue polypeptide: Urease accessory protein UreG 2 (215 aa).

11–18 (GPVGSGKT) is a binding site for GTP.

It belongs to the SIMIBI class G3E GTPase family. UreG subfamily. In terms of assembly, homodimer. UreD, UreF and UreG form a complex that acts as a GTP-hydrolysis-dependent molecular chaperone, activating the urease apoprotein by helping to assemble the nickel containing metallocenter of UreC. The UreE protein probably delivers the nickel.

Its subcellular location is the cytoplasm. In terms of biological role, facilitates the functional incorporation of the urease nickel metallocenter. This process requires GTP hydrolysis, probably effectuated by UreG. This chain is Urease accessory protein UreG 2, found in Methylorubrum extorquens (strain PA1) (Methylobacterium extorquens).